Here is a 901-residue protein sequence, read N- to C-terminus: Protein translocase subunit SecA (901 aa).

Residues Gln-87, 105–109, and Asp-512 contribute to the ATP site; that span reads GEGKT. The tract at residues 859–901 is disordered; that stretch reads HQDDDSAAAAALAAQTGERKVGRNDPCPCGSGKKYKQCHGRLQ. Residues Cys-885, Cys-887, Cys-896, and His-897 each contribute to the Zn(2+) site. Over residues 891–901 the composition is skewed to basic residues; it reads KKYKQCHGRLQ.

It belongs to the SecA family. In terms of assembly, monomer and homodimer. Part of the essential Sec protein translocation apparatus which comprises SecA, SecYEG and auxiliary proteins SecDF-YajC and YidC. The cofactor is Zn(2+).

The protein resides in the cell inner membrane. The protein localises to the cytoplasm. It carries out the reaction ATP + H2O + cellular proteinSide 1 = ADP + phosphate + cellular proteinSide 2.. Its function is as follows. Part of the Sec protein translocase complex. Interacts with the SecYEG preprotein conducting channel. Has a central role in coupling the hydrolysis of ATP to the transfer of proteins into and across the cell membrane, serving both as a receptor for the preprotein-SecB complex and as an ATP-driven molecular motor driving the stepwise translocation of polypeptide chains across the membrane. This Escherichia coli O127:H6 (strain E2348/69 / EPEC) protein is Protein translocase subunit SecA.